The following is a 219-amino-acid chain: Uridylate kinase (219 aa).

ATP is bound at residue Gly9 to Ser10. Gly41 lines the UMP pocket. ATP-binding residues include Gly42 and Arg46. UMP contacts are provided by residues Asp63 and Thr110 to Thr116. ATP contacts are provided by Thr136, Asn137, Tyr142, and Asp145.

Belongs to the UMP kinase family. Homohexamer.

The protein localises to the cytoplasm. The catalysed reaction is UMP + ATP = UDP + ADP. It functions in the pathway pyrimidine metabolism; CTP biosynthesis via de novo pathway; UDP from UMP (UMPK route): step 1/1. Its activity is regulated as follows. Inhibited by UTP. Functionally, catalyzes the reversible phosphorylation of UMP to UDP. The polypeptide is Uridylate kinase (Archaeoglobus fulgidus (strain ATCC 49558 / DSM 4304 / JCM 9628 / NBRC 100126 / VC-16)).